The sequence spans 154 residues: Iron-sulfur cluster assembly 2 homolog, mitochondrial (154 aa).

Residues 1–8 (MAAARGLS) constitute a mitochondrion transit peptide. Positions 79, 144, and 146 each coordinate Fe cation.

The protein belongs to the HesB/IscA family. As to quaternary structure, heterotetramer; forms a dimer of dimers with IBA57. Interacts with [2Fe-2S]-ISCA2 forming the heterodimer [2Fe- 2S]-ISCA2-IBA57 complex; [2Fe-2S] cluster binding is absolutely required to promote the complex formation.

It is found in the mitochondrion. Its function is as follows. Involved in the maturation of mitochondrial 4Fe-4S proteins functioning late in the iron-sulfur cluster assembly pathway. May be involved in the binding of an intermediate of Fe/S cluster assembly. The protein is Iron-sulfur cluster assembly 2 homolog, mitochondrial (ISCA2) of Pongo abelii (Sumatran orangutan).